Here is a 227-residue protein sequence, read N- to C-terminus: tRNA (guanine-N(1)-)-methyltransferase (227 aa).

S-adenosyl-L-methionine contacts are provided by residues glycine 107 and 127–132 (LGDFIL).

The protein belongs to the RNA methyltransferase TrmD family. Homodimer.

It localises to the cytoplasm. The enzyme catalyses guanosine(37) in tRNA + S-adenosyl-L-methionine = N(1)-methylguanosine(37) in tRNA + S-adenosyl-L-homocysteine + H(+). Functionally, specifically methylates guanosine-37 in various tRNAs. In Mesomycoplasma hyopneumoniae (strain 7448) (Mycoplasma hyopneumoniae), this protein is tRNA (guanine-N(1)-)-methyltransferase.